Here is a 156-residue protein sequence, read N- to C-terminus: Endoribonuclease YbeY (156 aa).

Positions 122, 126, and 132 each coordinate Zn(2+).

It belongs to the endoribonuclease YbeY family. Zn(2+) serves as cofactor.

It localises to the cytoplasm. In terms of biological role, single strand-specific metallo-endoribonuclease involved in late-stage 70S ribosome quality control and in maturation of the 3' terminus of the 16S rRNA. This is Endoribonuclease YbeY from Geobacillus sp. (strain WCH70).